Consider the following 478-residue polypeptide: Protein nucleotidyltransferase YdiU (478 aa).

ATP-binding residues include G84, G86, R87, K107, D119, G120, R170, and R177. Residue D246 is the Proton acceptor of the active site. The Mg(2+) site is built by N247 and D256. D256 is a binding site for ATP.

Belongs to the SELO family. Mg(2+) serves as cofactor. The cofactor is Mn(2+).

It catalyses the reaction L-seryl-[protein] + ATP = 3-O-(5'-adenylyl)-L-seryl-[protein] + diphosphate. The enzyme catalyses L-threonyl-[protein] + ATP = 3-O-(5'-adenylyl)-L-threonyl-[protein] + diphosphate. It carries out the reaction L-tyrosyl-[protein] + ATP = O-(5'-adenylyl)-L-tyrosyl-[protein] + diphosphate. The catalysed reaction is L-histidyl-[protein] + UTP = N(tele)-(5'-uridylyl)-L-histidyl-[protein] + diphosphate. It catalyses the reaction L-seryl-[protein] + UTP = O-(5'-uridylyl)-L-seryl-[protein] + diphosphate. The enzyme catalyses L-tyrosyl-[protein] + UTP = O-(5'-uridylyl)-L-tyrosyl-[protein] + diphosphate. Its function is as follows. Nucleotidyltransferase involved in the post-translational modification of proteins. It can catalyze the addition of adenosine monophosphate (AMP) or uridine monophosphate (UMP) to a protein, resulting in modifications known as AMPylation and UMPylation. The chain is Protein nucleotidyltransferase YdiU from Shigella boydii serotype 4 (strain Sb227).